A 333-amino-acid chain; its full sequence is GTPase Obg (333 aa).

The region spanning M1–L159 is the Obg domain. Residues A160–G328 enclose the OBG-type G domain. GTP contacts are provided by residues G166–S173, F191–V195, D213–G216, N280–D283, and S309–V311. Mg(2+) is bound by residues S173 and T193.

The protein belongs to the TRAFAC class OBG-HflX-like GTPase superfamily. OBG GTPase family. Monomer. Requires Mg(2+) as cofactor.

The protein resides in the cytoplasm. Functionally, an essential GTPase which binds GTP, GDP and possibly (p)ppGpp with moderate affinity, with high nucleotide exchange rates and a fairly low GTP hydrolysis rate. Plays a role in control of the cell cycle, stress response, ribosome biogenesis and in those bacteria that undergo differentiation, in morphogenesis control. This is GTPase Obg from Thermosynechococcus vestitus (strain NIES-2133 / IAM M-273 / BP-1).